Consider the following 358-residue polypeptide: 3-isopropylmalate dehydrogenase (358 aa).

Substrate is bound by residues R92, R102, R130, and D224. Mg(2+) is bound by residues D224, D248, and D252. 282 to 294 (GSAPDIAGQGIAN) is an NAD(+) binding site.

This sequence belongs to the isocitrate and isopropylmalate dehydrogenases family. LeuB type 1 subfamily. In terms of assembly, homodimer. It depends on Mg(2+) as a cofactor. Mn(2+) serves as cofactor.

The protein localises to the cytoplasm. The catalysed reaction is (2R,3S)-3-isopropylmalate + NAD(+) = 4-methyl-2-oxopentanoate + CO2 + NADH. Its pathway is amino-acid biosynthesis; L-leucine biosynthesis; L-leucine from 3-methyl-2-oxobutanoate: step 3/4. Its function is as follows. Catalyzes the oxidation of 3-carboxy-2-hydroxy-4-methylpentanoate (3-isopropylmalate) to 3-carboxy-4-methyl-2-oxopentanoate. The product decarboxylates to 4-methyl-2 oxopentanoate. This Bordetella parapertussis (strain 12822 / ATCC BAA-587 / NCTC 13253) protein is 3-isopropylmalate dehydrogenase.